The following is a 1013-amino-acid chain: Probable outer membrane protein PmpG (1013 aa).

The first 27 residues, 1–27 (MQTSFHKFFLSMILAYSCCSLSGGGYA), serve as a signal peptide directing secretion. An Autotransporter domain is found at 733–1013 (GRSYCRGLWV…GLSAGSKVRF (281 aa)).

This sequence belongs to the PMP outer membrane protein family.

The protein resides in the secreted. The protein localises to the cell wall. It is found in the cell outer membrane. The chain is Probable outer membrane protein PmpG (pmpG) from Chlamydia trachomatis serovar D (strain ATCC VR-885 / DSM 19411 / UW-3/Cx).